We begin with the raw amino-acid sequence, 80 residues long: Exodeoxyribonuclease 7 small subunit (80 aa).

The protein belongs to the XseB family. As to quaternary structure, heterooligomer composed of large and small subunits.

It is found in the cytoplasm. The catalysed reaction is Exonucleolytic cleavage in either 5'- to 3'- or 3'- to 5'-direction to yield nucleoside 5'-phosphates.. In terms of biological role, bidirectionally degrades single-stranded DNA into large acid-insoluble oligonucleotides, which are then degraded further into small acid-soluble oligonucleotides. The polypeptide is Exodeoxyribonuclease 7 small subunit (Vibrio vulnificus (strain CMCP6)).